Reading from the N-terminus, the 130-residue chain is Small ribosomal subunit protein uS8 (130 aa).

It belongs to the universal ribosomal protein uS8 family. As to quaternary structure, part of the 30S ribosomal subunit. Contacts proteins S5 and S12.

One of the primary rRNA binding proteins, it binds directly to 16S rRNA central domain where it helps coordinate assembly of the platform of the 30S subunit. The sequence is that of Small ribosomal subunit protein uS8 from Yersinia enterocolitica serotype O:8 / biotype 1B (strain NCTC 13174 / 8081).